Consider the following 355-residue polypeptide: tRNA N6-adenosine threonylcarbamoyltransferase (355 aa).

Fe cation contacts are provided by His113 and His117. Substrate-binding positions include Leu135–Gly139, Asp168, Gly181, and Asn279. Asp307 serves as a coordination point for Fe cation.

It belongs to the KAE1 / TsaD family. Fe(2+) serves as cofactor.

The protein resides in the cytoplasm. The enzyme catalyses L-threonylcarbamoyladenylate + adenosine(37) in tRNA = N(6)-L-threonylcarbamoyladenosine(37) in tRNA + AMP + H(+). Required for the formation of a threonylcarbamoyl group on adenosine at position 37 (t(6)A37) in tRNAs that read codons beginning with adenine. Is involved in the transfer of the threonylcarbamoyl moiety of threonylcarbamoyl-AMP (TC-AMP) to the N6 group of A37, together with TsaE and TsaB. TsaD likely plays a direct catalytic role in this reaction. The chain is tRNA N6-adenosine threonylcarbamoyltransferase from Bradyrhizobium sp. (strain BTAi1 / ATCC BAA-1182).